A 207-amino-acid polypeptide reads, in one-letter code: Large ribosomal subunit protein uL4 (207 aa).

Positions 47 to 78 are disordered; sequence GTAKTKTRAEVRGGGKKPWRQKGTGRARQGSI. The span at 60–71 shows a compositional bias: basic residues; the sequence is GGKKPWRQKGTG.

This sequence belongs to the universal ribosomal protein uL4 family. As to quaternary structure, part of the 50S ribosomal subunit.

Its function is as follows. One of the primary rRNA binding proteins, this protein initially binds near the 5'-end of the 23S rRNA. It is important during the early stages of 50S assembly. It makes multiple contacts with different domains of the 23S rRNA in the assembled 50S subunit and ribosome. In terms of biological role, forms part of the polypeptide exit tunnel. In Acholeplasma laidlawii (strain PG-8A), this protein is Large ribosomal subunit protein uL4.